The sequence spans 496 residues: Beta-amylase (496 aa).

The residue at position 2 (alanine 2) is an N-acetylalanine. Residues aspartate 54, histidine 94, and aspartate 102 each coordinate substrate. Glutamate 187 (proton donor) is an active-site residue. Lysine 296, histidine 301, and threonine 343 together coordinate substrate. Glutamate 381 acts as the Proton acceptor in catalysis. Residues 382–383 (NA) and arginine 421 each bind substrate.

Belongs to the glycosyl hydrolase 14 family. In terms of assembly, monomer.

It catalyses the reaction Hydrolysis of (1-&gt;4)-alpha-D-glucosidic linkages in polysaccharides so as to remove successive maltose units from the non-reducing ends of the chains.. This chain is Beta-amylase (BMY1), found in Glycine max (Soybean).